The primary structure comprises 89 residues: Small ribosomal subunit protein uS15 (89 aa).

Belongs to the universal ribosomal protein uS15 family. Part of the 30S ribosomal subunit. Forms a bridge to the 50S subunit in the 70S ribosome, contacting the 23S rRNA.

Its function is as follows. One of the primary rRNA binding proteins, it binds directly to 16S rRNA where it helps nucleate assembly of the platform of the 30S subunit by binding and bridging several RNA helices of the 16S rRNA. In terms of biological role, forms an intersubunit bridge (bridge B4) with the 23S rRNA of the 50S subunit in the ribosome. The polypeptide is Small ribosomal subunit protein uS15 (Streptococcus suis (strain 98HAH33)).